The following is a 482-amino-acid chain: Ribosomal protein uS12 methylthiotransferase RimO (482 aa).

Positions M2–P115 constitute an MTTase N-terminal domain. Residues C11, C47, C79, C177, C181, and C184 each contribute to the [4Fe-4S] cluster site. Residues R163 to E394 form the Radical SAM core domain. One can recognise a TRAM domain in the interval R397–G466.

This sequence belongs to the methylthiotransferase family. RimO subfamily. [4Fe-4S] cluster serves as cofactor.

The protein localises to the cytoplasm. It carries out the reaction L-aspartate(89)-[ribosomal protein uS12]-hydrogen + (sulfur carrier)-SH + AH2 + 2 S-adenosyl-L-methionine = 3-methylsulfanyl-L-aspartate(89)-[ribosomal protein uS12]-hydrogen + (sulfur carrier)-H + 5'-deoxyadenosine + L-methionine + A + S-adenosyl-L-homocysteine + 2 H(+). Its function is as follows. Catalyzes the methylthiolation of an aspartic acid residue of ribosomal protein uS12. This is Ribosomal protein uS12 methylthiotransferase RimO from Roseiflexus castenholzii (strain DSM 13941 / HLO8).